We begin with the raw amino-acid sequence, 1092 residues long: Probable arabinosyltransferase A (1092 aa).

13 helical membrane passes run 21–43 (IARL…VPLL), 214–233 (AVMV…LALL), 249–271 (GLWT…IVGA), 324–346 (VWMR…RCVL), 353–372 (VAAN…AAWL), 382–399 (PLIA…ENSI), 404–426 (LWPA…QGLI), 517–534 (FAVL…MVLL), 541–563 (GAVS…LLIL), 568–590 (WAIQ…AFAF), 602–624 (ALYV…GWFY), 639–661 (IAHY…LAGW), and 682–704 (ALAS…GSMV). The disordered stretch occupies residues 772–798 (PSGVSEHLEPEPVGTNPGTPNSEGPVD).

It belongs to the emb family.

The protein localises to the cell membrane. Functionally, arabinosyl transferase responsible for the polymerization of arabinose into the arabinan of arabinogalactan. The protein is Probable arabinosyltransferase A (embA) of Mycolicibacterium smegmatis (Mycobacterium smegmatis).